The sequence spans 85 residues: U4-theraphotoxin-Hhn1i (85 aa).

The first 22 residues, Met-1 to Ala-22, serve as a signal peptide directing secretion. A propeptide spanning residues Glu-23 to Arg-48 is cleaved from the precursor. 3 disulfides stabilise this stretch: Cys-52-Cys-66, Cys-56-Cys-77, and Cys-71-Cys-82.

Belongs to the neurotoxin 12 (Hwtx-2) family. 02 (Hwtx-2) subfamily. Expressed by the venom gland.

The protein localises to the secreted. In terms of biological role, postsynaptic neurotoxin. This is U4-theraphotoxin-Hhn1i from Cyriopagopus hainanus (Chinese bird spider).